Consider the following 382-residue polypeptide: O-antigen polymerase (382 aa).

Residues 1–3 (MNN) are Cytoplasmic-facing. A helical membrane pass occupies residues 4–22 (INKIFITFLCIELIIGGGG). At 23-34 (RLLEPLGIFPLR) the chain is on the periplasmic side. The chain crosses the membrane as a helical span at residues 35–54 (YLLFVFSFILLIFNLVTFNF). Topologically, residues 55 to 62 (SITQKCVS) are cytoplasmic. Residues 63 to 81 (LFIWLLLFPFYGFFVGLLA) form a helical membrane-spanning segment. At 82-94 (GNKINDILFDVQP) the chain is on the periplasmic side. Residues 95–112 (YLFMLSLIYLFTLRYTLK) form a helical membrane-spanning segment. Over 113-125 (VFSCEIFIKIVNA) the chain is Cytoplasmic. A helical membrane pass occupies residues 126 to 146 (FALYGSLLYISYIILLNFGLL). The Periplasmic segment spans residues 147–167 (NFNLIYEHLSLTSEFFFRPDG). The chain crosses the membrane as a helical span at residues 168-187 (AFFSKSFYFFGVGAIISFVD). The Cytoplasmic segment spans residues 188-189 (KK). A helical transmembrane segment spans residues 190–206 (YLKCLIIVLAILLTESR). Topologically, residues 207-208 (GV) are periplasmic. Residues 209–226 (LLFTTLSLLLASFKLHKL) form a helical membrane-spanning segment. Residues 227–229 (YLN) are Cytoplasmic-facing. The helical transmembrane segment at 230–247 (TIIIILGSVLFIIMLYMV) threads the bilayer. The Periplasmic segment spans residues 248–300 (GSRSEDSDSVRFNDLYFYYKNVDLATFLFGRGFGSFILDRLRIEIVPLEILQK). Residues 301–318 (TGVIGVFISLVPMLLIFL) traverse the membrane as a helical segment. At 319–329 (KGYFLNSTKTS) the chain is on the cytoplasmic side. A helical transmembrane segment spans residues 330 to 349 (LMMSLILFFSITVSITNPFL). At 350-352 (FTP) the chain is on the periplasmic side. A helical transmembrane segment spans residues 353–370 (MGIFIIGVVVLWVFSIEN). Topologically, residues 371–382 (IQISNNLTSGAK) are cytoplasmic.

The protein localises to the cell inner membrane. The catalysed reaction is n lipid-linked O-antigen repeat units = a lipid-linked O antigen + (n-1) polyisoprenyl diphosphate.. Its pathway is bacterial outer membrane biogenesis; LPS O-antigen biosynthesis. In terms of biological role, polymerase involved in the biosynthesis of the lipopolysaccharide (LPS). Catalyzes the polymerization of the O-antigen repeat units on the periplasmic face of the inner membrane, leading to the formation of the lipid-linked O-antigen molecule. In Shigella flexneri, this protein is O-antigen polymerase.